Consider the following 321-residue polypeptide: Malate dehydrogenase (321 aa).

Residues Gly-11 to Gly-16 and Asp-35 each bind NAD(+). The substrate site is built by Arg-84 and Arg-90. Residues Asn-97 and Ile-120 to Asn-122 contribute to the NAD(+) site. Substrate is bound by residues Asn-122 and Arg-153. His-177 acts as the Proton acceptor in catalysis.

The protein belongs to the LDH/MDH superfamily. MDH type 3 family.

The enzyme catalyses (S)-malate + NAD(+) = oxaloacetate + NADH + H(+). In terms of biological role, catalyzes the reversible oxidation of malate to oxaloacetate. The sequence is that of Malate dehydrogenase from Rickettsia peacockii (strain Rustic).